A 165-amino-acid polypeptide reads, in one-letter code: Phosphopantetheine adenylyltransferase (165 aa).

T9 is a substrate binding site. ATP contacts are provided by residues 9–10 and H17; that span reads TF. Residues K41, L73, and R87 each contribute to the substrate site. ATP is bound by residues 88-90, E98, and 123-129; these read GLR and YQFISGT.

This sequence belongs to the bacterial CoaD family. As to quaternary structure, homohexamer. It depends on Mg(2+) as a cofactor.

Its subcellular location is the cytoplasm. It catalyses the reaction (R)-4'-phosphopantetheine + ATP + H(+) = 3'-dephospho-CoA + diphosphate. It participates in cofactor biosynthesis; coenzyme A biosynthesis; CoA from (R)-pantothenate: step 4/5. Reversibly transfers an adenylyl group from ATP to 4'-phosphopantetheine, yielding dephospho-CoA (dPCoA) and pyrophosphate. In Polynucleobacter necessarius subsp. necessarius (strain STIR1), this protein is Phosphopantetheine adenylyltransferase.